A 410-amino-acid chain; its full sequence is BTB/POZ and MATH domain-containing protein 5 (410 aa).

The tract at residues 1–24 is disordered; sequence MSESVIQGSNPDRVLSPTSSKSVT. Residues 28–162 enclose the MATH domain; sequence NGSHQFVIQG…DDCLIINCTV (135 aa). A BTB domain is found at 198 to 264; sequence SDITFNIAGE…MYKDSLPEDV (67 aa).

The protein belongs to the Tdpoz family. As to quaternary structure, heterodimer with BPM1 and BPM3. Interacts with RAP2-4. Binds to MYB56 at the promoter of FLOWERING LOCUS T (FT). In terms of tissue distribution, ubiquitous.

The protein localises to the nucleus. It is found in the cytoplasm. It participates in protein modification; protein ubiquitination. In terms of biological role, may act as a substrate-specific adapter of an E3 ubiquitin-protein ligase complex (CUL3-RBX1-BTB) which mediates the ubiquitination and subsequent proteasomal degradation of target proteins. The polypeptide is BTB/POZ and MATH domain-containing protein 5 (BPM5) (Arabidopsis thaliana (Mouse-ear cress)).